We begin with the raw amino-acid sequence, 383 residues long: BRISC and BRCA1-A complex member 2 (383 aa).

Position 1 is an N-acetylmethionine (M1). A Phosphoserine modification is found at S2. UEV-like regions lie at residues 30 to 147 and 275 to 364; these read DATN…TLLE and IAAF…RAKA.

Belongs to the BABAM2 family. In terms of assembly, component of the ARISC complex, at least composed of UIMC1/RAP80, ABRAXAS1, BRCC3/BRCC36, BABAM2 and BABAM1/NBA1. Component of the BRCA1-A complex, at least composed of BRCA1, BARD1, UIMC1/RAP80, ABRAXAS1, BRCC3/BRCC36, BABAM2 and BABAM1/NBA1. In the BRCA1-A complex, interacts directly with ABRAXAS1, BRCC3/BRCC36 and BABAM1/NBA1. Binds polyubiquitin. Component of the BRISC complex, at least composed of ABRAXAS2, BRCC3/BRCC36, BABAM2 and BABAM1/NBA1. Identified in a complex with SHMT2 and the other subunits of the BRISC complex. Component of the BRCA1/BRCA2 containing complex (BRCC), which also contains BRCA1, BRCA2, BARD1, BRCC3/BRCC36 and RAD51. BRCC is a ubiquitin E3 ligase complex that enhances cellular survival following DNA damage. May interact with FAS and TNFRSF1A. As to expression, expressed in all cell lines examined. Highly expressed in placenta.

Its subcellular location is the cytoplasm. It localises to the nucleus. In terms of biological role, component of the BRCA1-A complex, a complex that specifically recognizes 'Lys-63'-linked ubiquitinated histones H2A and H2AX at DNA lesions sites, leading to target the BRCA1-BARD1 heterodimer to sites of DNA damage at double-strand breaks (DSBs). The BRCA1-A complex also possesses deubiquitinase activity that specifically removes 'Lys-63'-linked ubiquitin on histones H2A and H2AX. In the BRCA1-A complex, it acts as an adapter that bridges the interaction between BABAM1/NBA1 and the rest of the complex, thereby being required for the complex integrity and modulating the E3 ubiquitin ligase activity of the BRCA1-BARD1 heterodimer. Component of the BRISC complex, a multiprotein complex that specifically cleaves 'Lys-63'-linked ubiquitin in various substrates. Within the BRISC complex, acts as an adapter that bridges the interaction between BABAM1/NBA1 and the rest of the complex, thereby being required for the complex integrity. The BRISC complex is required for normal mitotic spindle assembly and microtubule attachment to kinetochores via its role in deubiquitinating NUMA1. The BRISC complex plays a role in interferon signaling via its role in the deubiquitination of the interferon receptor IFNAR1; deubiquitination increases IFNAR1 activity by enhancing its stability and cell surface expression. Down-regulates the response to bacterial lipopolysaccharide (LPS) via its role in IFNAR1 deubiquitination. May play a role in homeostasis or cellular differentiation in cells of neural, epithelial and germline origins. May also act as a death receptor-associated anti-apoptotic protein, which inhibits the mitochondrial apoptotic pathway. May regulate TNF-alpha signaling through its interactions with TNFRSF1A; however these effects may be indirect. The chain is BRISC and BRCA1-A complex member 2 from Homo sapiens (Human).